The following is a 380-amino-acid chain: Cytochrome b (380 aa).

4 consecutive transmembrane segments (helical) span residues 33 to 53, 77 to 98, 113 to 133, and 178 to 198; these read FGSLLGMCLMIQILTGLFLAM, WLIRYLHANGASMFFICLFIHV, WNIGIVLLLTTMATAFVGYVL, and FFAFHFILPFIITALVLVHLL. Heme b-binding residues include histidine 83 and histidine 97. Histidine 182 and histidine 196 together coordinate heme b. Position 201 (histidine 201) interacts with a ubiquinone. 4 consecutive transmembrane segments (helical) span residues 226 to 246, 288 to 308, 320 to 340, and 347 to 367; these read IKDLLGALILLMVLMILVLFF, LGGVLALILSILILATLPLLN, ITQALYWIFVANLLTXTWIGG, and FTLIGXIASXLXFXIIIIFMP.

This sequence belongs to the cytochrome b family. In terms of assembly, the cytochrome bc1 complex contains 11 subunits: 3 respiratory subunits (MT-CYB, CYC1 and UQCRFS1), 2 core proteins (UQCRC1 and UQCRC2) and 6 low-molecular weight proteins (UQCRH/QCR6, UQCRB/QCR7, UQCRQ/QCR8, UQCR10/QCR9, UQCR11/QCR10 and a cleavage product of UQCRFS1). This cytochrome bc1 complex then forms a dimer. Heme b is required as a cofactor.

It localises to the mitochondrion inner membrane. Functionally, component of the ubiquinol-cytochrome c reductase complex (complex III or cytochrome b-c1 complex) that is part of the mitochondrial respiratory chain. The b-c1 complex mediates electron transfer from ubiquinol to cytochrome c. Contributes to the generation of a proton gradient across the mitochondrial membrane that is then used for ATP synthesis. This is Cytochrome b (MT-CYB) from Rhipidomys wetzeli (Wetzel's climbing mouse).